A 374-amino-acid chain; its full sequence is Peptide chain release factor 2 (374 aa).

The residue at position 250 (Gln-250) is an N5-methylglutamine.

This sequence belongs to the prokaryotic/mitochondrial release factor family. Methylated by PrmC. Methylation increases the termination efficiency of RF2.

The protein localises to the cytoplasm. Functionally, peptide chain release factor 2 directs the termination of translation in response to the peptide chain termination codons UGA and UAA. This is Peptide chain release factor 2 from Roseobacter denitrificans (strain ATCC 33942 / OCh 114) (Erythrobacter sp. (strain OCh 114)).